Here is a 20-residue protein sequence, read N- to C-terminus: GIFTFEDESTTTVAPAKLYK.

The protein belongs to the BetVI family.

The chain is Protein PR-L3 from Lupinus luteus (European yellow lupine).